Here is a 122-residue protein sequence, read N- to C-terminus: Large ribosomal subunit protein uL14c (122 aa).

The protein belongs to the universal ribosomal protein uL14 family. Part of the 50S ribosomal subunit.

Its subcellular location is the plastid. It localises to the chloroplast. Its function is as follows. Binds to 23S rRNA. This is Large ribosomal subunit protein uL14c from Chaetosphaeridium globosum (Charophycean green alga).